A 60-amino-acid chain; its full sequence is Large ribosomal subunit protein bL32 (60 aa).

The interval 1-22 (MAVPARHTSKAKKNKRRTHYKL) is disordered. A compositionally biased stretch (basic residues) spans 7-20 (HTSKAKKNKRRTHY).

Belongs to the bacterial ribosomal protein bL32 family.

This chain is Large ribosomal subunit protein bL32, found in Streptococcus pyogenes serotype M3 (strain ATCC BAA-595 / MGAS315).